The primary structure comprises 220 residues: Large ribosomal subunit protein eL15 (220 aa).

The span at 197–207 shows a compositional bias: basic and acidic residues; it reads KKRHEASRGAR. Residues 197-220 are disordered; the sequence is KKRHEASRGARDPWQIAEKLKEEK.

Belongs to the eukaryotic ribosomal protein eL15 family.

The polypeptide is Large ribosomal subunit protein eL15 (Desulfurococcus amylolyticus (strain DSM 18924 / JCM 16383 / VKM B-2413 / 1221n) (Desulfurococcus kamchatkensis)).